The chain runs to 141 residues: Nucleoside diphosphate kinase (141 aa).

Residues Lys11, Phe59, Arg87, Thr93, Arg104, and Asn114 each contribute to the ATP site. The active-site Pros-phosphohistidine intermediate is His117.

It belongs to the NDK family. As to quaternary structure, homotetramer. Mg(2+) is required as a cofactor.

It localises to the cytoplasm. The enzyme catalyses a 2'-deoxyribonucleoside 5'-diphosphate + ATP = a 2'-deoxyribonucleoside 5'-triphosphate + ADP. The catalysed reaction is a ribonucleoside 5'-diphosphate + ATP = a ribonucleoside 5'-triphosphate + ADP. In terms of biological role, major role in the synthesis of nucleoside triphosphates other than ATP. The ATP gamma phosphate is transferred to the NDP beta phosphate via a ping-pong mechanism, using a phosphorylated active-site intermediate. The sequence is that of Nucleoside diphosphate kinase from Burkholderia thailandensis (strain ATCC 700388 / DSM 13276 / CCUG 48851 / CIP 106301 / E264).